The sequence spans 194 residues: Large ribosomal subunit protein bL9 (194 aa).

Positions 156-167 are enriched in basic and acidic residues; sequence RGEDISSRREDQ. Residues 156–194 form a disordered region; the sequence is RGEDISSRREDQDAAAEAIAAAGEFFDPDAQQDEEPEQQ. Positions 181–194 are enriched in acidic residues; sequence FDPDAQQDEEPEQQ.

Belongs to the bacterial ribosomal protein bL9 family.

Binds to the 23S rRNA. This is Large ribosomal subunit protein bL9 from Rhodopseudomonas palustris (strain BisB5).